A 231-amino-acid polypeptide reads, in one-letter code: NADH-ubiquinone oxidoreductase chain 4 (231 aa).

7 helical membrane-spanning segments follow: residues 1–21, 34–54, 61–80, 84–106, 128–148, 156–176, and 211–231; these read PIAGSMVLAAILLKLGGYGII, VFLPFIVLALWGAILANLTCL, SLIAYSSVSHMGLVVAAIII, WGLSGAMALMIAHGFTSSALFCL, ILPMATTWWLLINLMNIATPP, LLIISALFNWCPTTMIMLGLS, and LLMILHIIPLVLISMKPELVI.

Belongs to the complex I subunit 4 family.

Its subcellular location is the mitochondrion membrane. It catalyses the reaction a ubiquinone + NADH + 5 H(+)(in) = a ubiquinol + NAD(+) + 4 H(+)(out). Core subunit of the mitochondrial membrane respiratory chain NADH dehydrogenase (Complex I) that is believed to belong to the minimal assembly required for catalysis. Complex I functions in the transfer of electrons from NADH to the respiratory chain. The immediate electron acceptor for the enzyme is believed to be ubiquinone. The polypeptide is NADH-ubiquinone oxidoreductase chain 4 (MT-ND4) (Tropidolaemus wagleri (Wagler's pit viper)).